The primary structure comprises 320 residues: ATP-dependent 6-phosphofructokinase (320 aa).

G12 is an ATP binding site. ADP contacts are provided by residues 22 to 26 (RSVVR) and 55 to 60 (RYSVSD). ATP contacts are provided by residues 73–74 (RF) and 103–106 (GDGS). D104 contacts Mg(2+). 126–128 (TID) contributes to the substrate binding site. The Proton acceptor role is filled by D128. R155 is a binding site for ADP. Substrate-binding positions include R163 and 170-172 (MGR). Residues 186 to 188 (GCE) and 214 to 216 (KKH) each bind ADP. Substrate is bound by residues E223, R244, and 250–253 (HIQR).

This sequence belongs to the phosphofructokinase type A (PFKA) family. ATP-dependent PFK group I subfamily. Prokaryotic clade 'B1' sub-subfamily. As to quaternary structure, homotetramer. The cofactor is Mg(2+).

The protein localises to the cytoplasm. It carries out the reaction beta-D-fructose 6-phosphate + ATP = beta-D-fructose 1,6-bisphosphate + ADP + H(+). Its pathway is carbohydrate degradation; glycolysis; D-glyceraldehyde 3-phosphate and glycerone phosphate from D-glucose: step 3/4. Allosterically activated by ADP and other diphosphonucleosides, and allosterically inhibited by phosphoenolpyruvate. Its function is as follows. Catalyzes the phosphorylation of D-fructose 6-phosphate to fructose 1,6-bisphosphate by ATP, the first committing step of glycolysis. The chain is ATP-dependent 6-phosphofructokinase from Baumannia cicadellinicola subsp. Homalodisca coagulata.